The primary structure comprises 806 residues: Acetyl-CoA decarbonylase/synthase complex subunit alpha 1 (806 aa).

[4Fe-4S] cluster contacts are provided by Cys73, Cys76, Cys77, Cys79, Cys84, and Cys94. CO is bound at residue His117. [Ni-4Fe-4S] cluster-binding residues include His250, Cys278, and Cys323. 4Fe-4S ferredoxin-type domains follow at residues Ser406–Ala436 and Phe445–Ile475. Cys417, Cys420, Cys423, Cys427, Cys455, Cys458, Cys461, and Cys465 together coordinate [4Fe-4S] cluster. 3 residues coordinate [Ni-4Fe-4S] cluster: Cys523, Cys552, and Cys587.

Belongs to the Ni-containing carbon monoxide dehydrogenase family. In terms of assembly, heterotetramer of two alpha and two epsilon subunits. The ACDS complex is made up of alpha, epsilon, beta, gamma and delta subunits with a probable stoichiometry of (alpha(2)epsilon(2))(4)-beta(8)-(gamma(1)delta(1))(8). The cofactor is [4Fe-4S] cluster. [Ni-4Fe-4S] cluster serves as cofactor.

The catalysed reaction is CO + 2 oxidized [2Fe-2S]-[ferredoxin] + H2O = 2 reduced [2Fe-2S]-[ferredoxin] + CO2 + 2 H(+). It functions in the pathway one-carbon metabolism; methanogenesis from acetate. In terms of biological role, part of the ACDS complex that catalyzes the reversible cleavage of acetyl-CoA, allowing growth on acetate as sole source of carbon and energy. The alpha-epsilon subcomponent functions as a carbon monoxide dehydrogenase. This is Acetyl-CoA decarbonylase/synthase complex subunit alpha 1 from Methanosarcina mazei (strain ATCC BAA-159 / DSM 3647 / Goe1 / Go1 / JCM 11833 / OCM 88) (Methanosarcina frisia).